The following is a 141-amino-acid chain: Large ribosomal subunit protein uL11 (141 aa).

It belongs to the universal ribosomal protein uL11 family. In terms of assembly, part of the ribosomal stalk of the 50S ribosomal subunit. Interacts with L10 and the large rRNA to form the base of the stalk. L10 forms an elongated spine to which L12 dimers bind in a sequential fashion forming a multimeric L10(L12)X complex. In terms of processing, one or more lysine residues are methylated.

Forms part of the ribosomal stalk which helps the ribosome interact with GTP-bound translation factors. This chain is Large ribosomal subunit protein uL11, found in Thermotoga sp. (strain RQ2).